Consider the following 467-residue polypeptide: Glutamate--tRNA ligase (467 aa).

Residues 10-20 (PSPTGHLHIGG) carry the 'HIGH' region motif. Zn(2+) is bound by residues Cys99, Cys101, Cys126, and Glu128. A 'KMSKS' region motif is present at residues 236-240 (RLSKR). Lys239 provides a ligand contact to ATP.

The protein belongs to the class-I aminoacyl-tRNA synthetase family. Glutamate--tRNA ligase type 1 subfamily. Monomer. Zn(2+) serves as cofactor.

It is found in the cytoplasm. It carries out the reaction tRNA(Glu) + L-glutamate + ATP = L-glutamyl-tRNA(Glu) + AMP + diphosphate. Its function is as follows. Catalyzes the attachment of glutamate to tRNA(Glu) in a two-step reaction: glutamate is first activated by ATP to form Glu-AMP and then transferred to the acceptor end of tRNA(Glu). This chain is Glutamate--tRNA ligase, found in Desulfosudis oleivorans (strain DSM 6200 / JCM 39069 / Hxd3) (Desulfococcus oleovorans).